Reading from the N-terminus, the 103-residue chain is Colicin-V (103 aa).

Positions 1 to 15 (MRTLTLNELDSVSGG) are excised as a propeptide. C91 and C102 are oxidised to a cystine.

It is found in the secreted. Its function is as follows. Colicin V kills sensitive cells by disrupting the membrane potential. In terms of biological role, colicins are polypeptide toxins produced by, and active against E.coli and closely related bacteria. The polypeptide is Colicin-V (cvaC) (Escherichia coli).